A 395-amino-acid chain; its full sequence is Guanine nucleotide-binding protein subunit beta-5 (395 aa).

WD repeat units follow at residues 103 to 142 (GHGNKVLCMDWCKDKRRIVSSSQDGKVIVWDSFTTNKEHA), 145 to 184 (MPCTWVMACAYAPSGCAIACGGLDNKCSVYPLTFDKNENM), 193 to 234 (MHTN…QSFH), 236 to 278 (HGAD…QAFE), 279 to 318 (THESDVNSVRYYPSGDAFASGSDDATCRLYDLRADREVAI), 320 to 362 (SKES…RVSI), and 365 to 394 (GHENRVSTLRVSPDGTAFCSGSWDHTLRVW).

The protein belongs to the WD repeat G protein beta family. As to quaternary structure, component of a complex composed of RGS9 (isoform RGS9-1), GNB5 and RGS9BP; within this complex, the presence of GNB5 stabilizes both itself and RGS9 and increases RGS9 GTPase-activating protein (GAP) activity. Interacts with RGS7, forming the RGS7-GNB5 complex; within this complex, the presence of GNB5 increases RGS7 GTPase-activating protein (GAP) activity. Interacts with GPR158; promotes the GTPase activator activity of the RGS7-GNB5 complex in absence of glycine, in contrast GTPase activator activity of the RGS7-GNB5 complex is inhibited in presence of glycine. Interacts with RGS6. As to expression, isoform 1 is only detected in retina. Isoform 2 is detected in brain (at protein level). Isoform 2 is detected in brain.

The protein localises to the membrane. Its function is as follows. Enhances GTPase-activating protein (GAP) activity of regulator of G protein signaling (RGS) proteins, such as RGS7 and RGS9, hence involved in the termination of the signaling initiated by the G protein coupled receptors (GPCRs) by accelerating the GTP hydrolysis on the G-alpha subunits, thereby promoting their inactivation. Increases RGS7 GTPase-activating protein (GAP) activity, thereby regulating mood and cognition. Increases RGS9 GTPase-activating protein (GAP) activity, hence contributes to the deactivation of G protein signaling initiated by D(2) dopamine receptors. May play an important role in neuronal signaling, including in the parasympathetic, but not sympathetic, control of heart rate. This is Guanine nucleotide-binding protein subunit beta-5 (Gnb5) from Mus musculus (Mouse).